The following is a 327-amino-acid chain: Phenylalanine--tRNA ligase alpha subunit (327 aa).

Glu252 is a Mg(2+) binding site.

It belongs to the class-II aminoacyl-tRNA synthetase family. Phe-tRNA synthetase alpha subunit type 1 subfamily. In terms of assembly, tetramer of two alpha and two beta subunits. The cofactor is Mg(2+).

Its subcellular location is the cytoplasm. It carries out the reaction tRNA(Phe) + L-phenylalanine + ATP = L-phenylalanyl-tRNA(Phe) + AMP + diphosphate + H(+). The polypeptide is Phenylalanine--tRNA ligase alpha subunit (Yersinia enterocolitica serotype O:8 / biotype 1B (strain NCTC 13174 / 8081)).